Consider the following 243-residue polypeptide: LexA repressor (243 aa).

Residues 1 to 30 (MSDDTGEFTDGSTESPADADGAGRRRAVDN) are disordered. Positions 21-30 (GAGRRRAVDN) are enriched in basic and acidic residues. Residues 56-76 (IREIGDAVGLTSTSSVAHQLR) constitute a DNA-binding region (H-T-H motif). Active-site for autocatalytic cleavage activity residues include serine 167 and lysine 204.

The protein belongs to the peptidase S24 family. In terms of assembly, homodimer.

It catalyses the reaction Hydrolysis of Ala-|-Gly bond in repressor LexA.. Its function is as follows. Represses a number of genes involved in the response to DNA damage (SOS response), including recA and lexA. In the presence of single-stranded DNA, RecA interacts with LexA causing an autocatalytic cleavage which disrupts the DNA-binding part of LexA, leading to derepression of the SOS regulon and eventually DNA repair. This Mycolicibacterium smegmatis (strain ATCC 700084 / mc(2)155) (Mycobacterium smegmatis) protein is LexA repressor.